We begin with the raw amino-acid sequence, 360 residues long: Photosystem II protein D1 2 (360 aa).

3 helical membrane passes run 29-46 (YVGW…TATI), 118-133 (HFLI…EWEL), and 142-156 (WICV…AATA). His118 serves as a coordination point for chlorophyll a. Tyr126 lines the pheophytin a pocket. [CaMn4O5] cluster is bound by residues Asp170 and Glu189. A helical transmembrane segment spans residues 197–218 (FHMLGVAGVFGGSLFSAMHGSL). Residue His198 participates in chlorophyll a binding. A quinone contacts are provided by residues His215 and 264–265 (SF). Residue His215 coordinates Fe cation. His272 contacts Fe cation. A helical membrane pass occupies residues 274–288 (FLAAWPVVGIWFTSL). [CaMn4O5] cluster-binding residues include His332, Glu333, Asp342, and Ala344. Residues 345–360 (AGEATPVALTAPAING) constitute a propeptide that is removed on maturation.

It belongs to the reaction center PufL/M/PsbA/D family. As to quaternary structure, PSII is composed of 1 copy each of membrane proteins PsbA, PsbB, PsbC, PsbD, PsbE, PsbF, PsbH, PsbI, PsbJ, PsbK, PsbL, PsbM, PsbT, PsbX, PsbY, PsbZ, Psb30/Ycf12, peripheral proteins PsbO, CyanoQ (PsbQ), PsbU, PsbV and a large number of cofactors. It forms dimeric complexes. The cofactor is The D1/D2 heterodimer binds P680, chlorophylls that are the primary electron donor of PSII, and subsequent electron acceptors. It shares a non-heme iron and each subunit binds pheophytin, quinone, additional chlorophylls, carotenoids and lipids. D1 provides most of the ligands for the Mn4-Ca-O5 cluster of the oxygen-evolving complex (OEC). There is also a Cl(-1) ion associated with D1 and D2, which is required for oxygen evolution. The PSII complex binds additional chlorophylls, carotenoids and specific lipids.. Post-translationally, tyr-161 forms a radical intermediate that is referred to as redox-active TyrZ, YZ or Y-Z. C-terminally processed by CtpA; processing is essential to allow assembly of the oxygen-evolving complex and thus photosynthetic growth.

It localises to the cellular thylakoid membrane. The catalysed reaction is 2 a plastoquinone + 4 hnu + 2 H2O = 2 a plastoquinol + O2. Photosystem II (PSII) is a light-driven water:plastoquinone oxidoreductase that uses light energy to abstract electrons from H(2)O, generating O(2) and a proton gradient subsequently used for ATP formation. It consists of a core antenna complex that captures photons, and an electron transfer chain that converts photonic excitation into a charge separation. The D1/D2 (PsbA/PsbD) reaction center heterodimer binds P680, the primary electron donor of PSII as well as several subsequent electron acceptors. This chain is Photosystem II protein D1 2, found in Synechococcus elongatus (strain ATCC 33912 / PCC 7942 / FACHB-805) (Anacystis nidulans R2).